The sequence spans 396 residues: 8-amino-7-oxononanoate synthase (396 aa).

R19 contributes to the substrate binding site. Position 106 to 107 (106 to 107 (GY)) interacts with pyridoxal 5'-phosphate. Residue H131 coordinates substrate. Residues S176, H204, and T233 each coordinate pyridoxal 5'-phosphate. An N6-(pyridoxal phosphate)lysine modification is found at K236. Residue T350 participates in substrate binding.

The protein belongs to the class-II pyridoxal-phosphate-dependent aminotransferase family. BioF subfamily. Homodimer. Requires pyridoxal 5'-phosphate as cofactor.

The enzyme catalyses 6-carboxyhexanoyl-[ACP] + L-alanine + H(+) = (8S)-8-amino-7-oxononanoate + holo-[ACP] + CO2. It functions in the pathway cofactor biosynthesis; biotin biosynthesis. In terms of biological role, catalyzes the decarboxylative condensation of pimeloyl-[acyl-carrier protein] and L-alanine to produce 8-amino-7-oxononanoate (AON), [acyl-carrier protein], and carbon dioxide. The sequence is that of 8-amino-7-oxononanoate synthase from Pseudomonas savastanoi pv. phaseolicola (strain 1448A / Race 6) (Pseudomonas syringae pv. phaseolicola (strain 1448A / Race 6)).